The primary structure comprises 156 residues: Small ribosomal subunit protein uS7 (156 aa).

Belongs to the universal ribosomal protein uS7 family. Part of the 30S ribosomal subunit. Contacts proteins S9 and S11.

One of the primary rRNA binding proteins, it binds directly to 16S rRNA where it nucleates assembly of the head domain of the 30S subunit. Is located at the subunit interface close to the decoding center, probably blocks exit of the E-site tRNA. The protein is Small ribosomal subunit protein uS7 of Latilactobacillus sakei subsp. sakei (strain 23K) (Lactobacillus sakei subsp. sakei).